A 206-amino-acid polypeptide reads, in one-letter code: Small ribosomal subunit protein uS4 (206 aa).

An S4 RNA-binding domain is found at 96–156 (CRLDNVVYRM…EKSKNQLRIA (61 aa)).

It belongs to the universal ribosomal protein uS4 family. As to quaternary structure, part of the 30S ribosomal subunit. Contacts protein S5. The interaction surface between S4 and S5 is involved in control of translational fidelity.

In terms of biological role, one of the primary rRNA binding proteins, it binds directly to 16S rRNA where it nucleates assembly of the body of the 30S subunit. Its function is as follows. With S5 and S12 plays an important role in translational accuracy. The sequence is that of Small ribosomal subunit protein uS4 from Pseudomonas aeruginosa (strain LESB58).